Consider the following 156-residue polypeptide: Arginine repressor (156 aa).

This sequence belongs to the ArgR family.

It localises to the cytoplasm. The protein operates within amino-acid biosynthesis; L-arginine biosynthesis [regulation]. Its function is as follows. Regulates arginine biosynthesis genes. The chain is Arginine repressor from Shewanella oneidensis (strain ATCC 700550 / JCM 31522 / CIP 106686 / LMG 19005 / NCIMB 14063 / MR-1).